The sequence spans 290 residues: MLKSQRVTTMKESLISFIREKIEEYNYRGAVVGVSGGVDSAVVLSLCVQALGKDRVFALILPERDSSKDSLKDAVDLCETLGVEYRKRSITPILRKIGAYRLFPPRFFLPNSIVKRYVLNRWNTLSKDPFLDDLRNTGPEEFLKGLAYYRIKHRIRMCLLYFEAEKRGYAVVGTTNRTEYLTGLYVKWGDEAVDIEPIMHLYKTQVFELAKEMNVPEKILKKPPSPDLIPGITDEMAFNMSYLELDRILMKLEKNEDLSDEDPKKVERVKKILEFSEKYRRDIPITFDRI.

33 to 40 (GVSGGVDS) provides a ligand contact to ATP. A Mg(2+)-binding site is contributed by D39. Residue R154 participates in deamido-NAD(+) binding. T174 lines the ATP pocket. E179 contributes to the Mg(2+) binding site. 2 residues coordinate deamido-NAD(+): K187 and D194. 2 residues coordinate ATP: K203 and S225.

The protein belongs to the NAD synthetase family. In terms of assembly, homodimer.

The catalysed reaction is deamido-NAD(+) + NH4(+) + ATP = AMP + diphosphate + NAD(+) + H(+). It functions in the pathway cofactor biosynthesis; NAD(+) biosynthesis; NAD(+) from deamido-NAD(+) (ammonia route): step 1/1. In terms of biological role, catalyzes the ATP-dependent amidation of deamido-NAD to form NAD. Uses ammonia as a nitrogen source. The protein is NH(3)-dependent NAD(+) synthetase of Thermotoga neapolitana (strain ATCC 49049 / DSM 4359 / NBRC 107923 / NS-E).